The chain runs to 396 residues: S-adenosylmethionine synthase 2 (396 aa).

E13 contributes to the Mg(2+) binding site. ATP is bound at residue H19. E47 lines the K(+) pocket. 2 residues coordinate L-methionine: E60 and Q103. Residues 171-173, 239-242, D250, 256-257, A273, K277, and K281 each bind ATP; these read DGK, SGRF, and RK. D250 contacts L-methionine. Residue K281 participates in L-methionine binding.

This sequence belongs to the AdoMet synthase family. Homotetramer. Mn(2+) is required as a cofactor. The cofactor is Mg(2+). Co(2+) serves as cofactor. Requires K(+) as cofactor. Expressed in roots, stems and leaves (at protein level).

Its subcellular location is the cytoplasm. The enzyme catalyses L-methionine + ATP + H2O = S-adenosyl-L-methionine + phosphate + diphosphate. Its pathway is amino-acid biosynthesis; S-adenosyl-L-methionine biosynthesis; S-adenosyl-L-methionine from L-methionine: step 1/1. Catalyzes the formation of S-adenosylmethionine from methionine and ATP. The reaction comprises two steps that are both catalyzed by the same enzyme: formation of S-adenosylmethionine (AdoMet) and triphosphate, and subsequent hydrolysis of the triphosphate. May be involved in the synthesis of betain in response to abiotic stress such as high salinity. The protein is S-adenosylmethionine synthase 2 (SAMS2) of Atriplex nummularia (Old man saltbush).